The following is a 133-amino-acid chain: Covalently-linked cell wall protein 12 (133 aa).

Positions 1 to 18 are cleaved as a signal peptide; sequence MQFSTVASIAAVAAVASA. N-linked (GlcNAc...) asparagine glycosylation is present at N21. O-linked (Man) threonine glycosylation is found at T23, T24, and T26. O-linked (Man) serine glycans are attached at residues S28 and S31. O-linked (Man) threonine glycosylation is found at T32, T33, T36, and T38. O-linked (Man) serine glycans are attached at residues S39 and S46. An O-linked (Man) threonine glycan is attached at T48. 2 repeat units span residues 75-88 and 91-103. The disordered stretch occupies residues 79–104; sequence PKNGTSTAAPVTSTEAPKNTTSAAPT. A Glycyl lysine isopeptide (Lys-Gly) (interchain with G-Cter in ubiquitin) cross-link involves residue K80. N81 and N97 each carry an N-linked (GlcNAc...) asparagine glycan. The segment covering 81–104 has biased composition (polar residues); sequence NGTSTAAPVTSTEAPKNTTSAAPT. The GPI-anchor amidated glycine moiety is linked to residue G112. Residues 113 to 133 constitute a propeptide, removed in mature form; it reads AAAKALPAAGALLAGAAALLL.

This sequence to yeast protein YDR134C. In terms of processing, extensively O-glycosylated; glycans consist probably of single mannose residues. N-glycosylated. Post-translationally, the GPI-anchor is attached to the protein in the endoplasmic reticulum and serves to target the protein to the cell surface. There, the glucosamine-inositol phospholipid moiety is cleaved off and the GPI-modified mannoprotein is covalently attached via its lipidless GPI glycan remnant to the 1,6-beta-glucan of the outer cell wall layer.

The protein resides in the secreted. Its subcellular location is the cell wall. It localises to the membrane. Component of the cell wall. May play a role in the formation of a tightly packed outer mannan layer, which protects the inner glucan. The sequence is that of Covalently-linked cell wall protein 12 (CCW12) from Saccharomyces cerevisiae (strain ATCC 204508 / S288c) (Baker's yeast).